We begin with the raw amino-acid sequence, 349 residues long: RxLR effector protein CRE15 (349 aa).

The signal sequence occupies residues 1–33 (MITFKRLSSARWGALLTSIAVLFFLAITKGADA). The RxLR-dEER motif lies at 46-62 (RRLRTTTADAYYASEDR).

The protein belongs to the RxLR effector family. As to quaternary structure, interacts directly with the potato ortholog of vascular highway 1 (VH1)-interacting kinase (VIK), encoding a predicted MEK kinase (MAP3K).

The protein resides in the secreted. It is found in the host cell membrane. In terms of biological role, effector that promotes P.infestans virulence in Nicotiana benthamiana and potato. Attenuates cell death triggered by the pathogen-associated molecular pattern infestin 1 (INF1), indicating that the effector suppresses pattern-triggered immunity. However, it does not attenuate cell death triggered by a range of resistance proteins, suggesting that it specifically suppresses INF1-triggered cell death (ICD). Targets host MAP3K VIK in order to utilize or promote its ability to negatively regulate immunity. The sequence is that of RxLR effector protein CRE15 from Phytophthora infestans (strain T30-4) (Potato late blight agent).